The sequence spans 407 residues: Large ribosomal subunit protein uL3-like (407 aa).

Positions 1 to 31 are enriched in basic residues; the sequence is MSHRKFSAPRHGHLGFLPHKRSHRHRGKVKT. Disordered stretches follow at residues 1 to 35 and 383 to 407; these read MSHR…WPRD and QEKR…SGDL. The span at 394–407 shows a compositional bias: basic and acidic residues; that stretch reads KHLEKEKPETSGDL.

This sequence belongs to the universal ribosomal protein uL3 family. Component of the large ribosomal subunit in striated muscle cells.

Functionally, heart- and skeletal muscle-specific component of the ribosome, which regulates muscle function. Component of the large ribosomal subunit in striated muscle cells: replaces the RPL3 paralog in the ribosome in these cells. The ribosome is a large ribonucleoprotein complex responsible for the synthesis of proteins in the cell. Inhibits myotube growth and muscle function. This is Large ribosomal subunit protein uL3-like (RPL3L) from Bos taurus (Bovine).